A 105-amino-acid polypeptide reads, in one-letter code: L-rhamnose mutarotase (105 aa).

Residue tyrosine 19 participates in substrate binding. The Proton donor role is filled by histidine 23. Substrate contacts are provided by residues tyrosine 42 and tryptophan 77–tryptophan 78.

The protein belongs to the rhamnose mutarotase family. Homodimer.

The protein resides in the cytoplasm. It catalyses the reaction alpha-L-rhamnose = beta-L-rhamnose. Its pathway is carbohydrate metabolism; L-rhamnose metabolism. In terms of biological role, involved in the anomeric conversion of L-rhamnose. This is L-rhamnose mutarotase from Mesorhizobium japonicum (strain LMG 29417 / CECT 9101 / MAFF 303099) (Mesorhizobium loti (strain MAFF 303099)).